The sequence spans 1251 residues: Immunoglobulin-like and fibronectin type III domain-containing protein 1 (1251 aa).

The 91-residue stretch at 29 to 119 (PDFEQKPVTS…GEAACSVRLT (91 aa)) folds into the Ig-like 1 domain. The tract at residues 61–81 (RWQNSKGDLSDSSKYKISSSP) is disordered. Residues 188 to 221 (IVDYRGMLRRLQEMKKEQEDKMAQYINTISSLRH) adopt a coiled-coil conformation. Positions 309–398 (PRVVVPLAET…SSAWLVVEAG (90 aa)) constitute an Ig-like 2 domain. Residues 403–433 (LQSTSADHKLQSRRSGKDGRLDIYGERRDAT) are compositionally biased toward basic and acidic residues. The segment at 403 to 454 (LQSTSADHKLQSRRSGKDGRLDIYGERRDATRSSTSRYKPGTGSFSKDAQGP) is disordered. Polar residues predominate over residues 434–449 (RSSTSRYKPGTGSFSK). Residues 454–539 (PMGHFSQGLA…GDQQSEATLT (86 aa)) form the Ig-like 3 domain. 3 Fibronectin type-III domains span residues 646-741 (PPQG…VAPE), 746-845 (APSA…MRPP), and 847-942 (LVRN…AMPV). An Ig-like 4 domain is found at 946–1030 (PKFLVDSSTK…LRTLQGKEVA (85 aa)). Positions 1043–1137 (APGPIHLQEN…TSQPWCIPRQ (95 aa)) constitute a Fibronectin type-III 4 domain. The Ig-like 5 domain maps to 1151 to 1245 (PDLSQKPRFL…GQAVSTATLI (95 aa)).

As to quaternary structure, interacts with FLNC. Interacts with KY. Expressed in skeletal muscle.

The protein resides in the nucleus. The protein localises to the cytoplasm. Its subcellular location is the myofibril. It is found in the sarcomere. It localises to the z line. This chain is Immunoglobulin-like and fibronectin type III domain-containing protein 1 (IGFN1), found in Homo sapiens (Human).